The primary structure comprises 77 residues: MLVLTRKPGEKIMIGDDIVITVMEGRGDGVRIGIEAPRGVTIQRSEVVEAIAAANVAASQAGPETEELLKSILPPAG.

This sequence belongs to the CsrA/RsmA family. Homodimer; the beta-strands of each monomer intercalate to form a hydrophobic core, while the alpha-helices form wings that extend away from the core.

Its subcellular location is the cytoplasm. Its function is as follows. A translational regulator that binds mRNA to regulate translation initiation and/or mRNA stability. Usually binds in the 5'-UTR at or near the Shine-Dalgarno sequence preventing ribosome-binding, thus repressing translation. Its main target seems to be the major flagellin gene, while its function is anatagonized by FliW. The chain is Translational regulator CsrA from Pseudarthrobacter chlorophenolicus (strain ATCC 700700 / DSM 12829 / CIP 107037 / JCM 12360 / KCTC 9906 / NCIMB 13794 / A6) (Arthrobacter chlorophenolicus).